A 101-amino-acid chain; its full sequence is uncharacterized protein (101 aa).

A disordered region spans residues 39-74 (CDERHGRPLPHSQESQHGSATSKKAVRGTADTAPLE). A compositionally biased stretch (polar residues) spans 50-60 (SQESQHGSATS).

This is an uncharacterized protein from Homo sapiens (Human).